The primary structure comprises 205 residues: Pyridoxine/pyridoxamine 5'-phosphate oxidase (205 aa).

Residues 53 to 58 (RMVLLK), 68 to 69 (YT), K75, and Q97 contribute to the FMN site. K58 provides a ligand contact to substrate. Residues Y115, R119, and S123 each coordinate substrate. FMN contacts are provided by residues 132-133 (QS) and W177. Residue 183 to 185 (RLH) participates in substrate binding. R187 lines the FMN pocket.

It belongs to the pyridoxamine 5'-phosphate oxidase family. Homodimer. Requires FMN as cofactor.

It catalyses the reaction pyridoxamine 5'-phosphate + O2 + H2O = pyridoxal 5'-phosphate + H2O2 + NH4(+). It carries out the reaction pyridoxine 5'-phosphate + O2 = pyridoxal 5'-phosphate + H2O2. The protein operates within cofactor metabolism; pyridoxal 5'-phosphate salvage; pyridoxal 5'-phosphate from pyridoxamine 5'-phosphate: step 1/1. It functions in the pathway cofactor metabolism; pyridoxal 5'-phosphate salvage; pyridoxal 5'-phosphate from pyridoxine 5'-phosphate: step 1/1. In terms of biological role, catalyzes the oxidation of either pyridoxine 5'-phosphate (PNP) or pyridoxamine 5'-phosphate (PMP) into pyridoxal 5'-phosphate (PLP). This Mesorhizobium japonicum (strain LMG 29417 / CECT 9101 / MAFF 303099) (Mesorhizobium loti (strain MAFF 303099)) protein is Pyridoxine/pyridoxamine 5'-phosphate oxidase.